Reading from the N-terminus, the 85-residue chain is Protein AC4 (85 aa).

Gly-2 carries N-myristoyl glycine; by host lipidation. Residues 44 to 63 are disordered; sequence RAPMSNPTSRKTGTVSNGDC. Residues 46-62 are compositionally biased toward polar residues; it reads PMSNPTSRKTGTVSNGD.

It belongs to the geminiviridae protein AC4/C4 family.

The protein resides in the host cell membrane. Pathogenicity determinant. May act as a suppressor of RNA-mediated gene silencing, also known as post-transcriptional gene silencing (PTGS), a mechanism of plant viral defense that limits the accumulation of viral RNAs. The chain is Protein AC4 from Potato yellow mosaic virus (isolate Venezuela) (PYMV).